Here is a 619-residue protein sequence, read N- to C-terminus: E3 ubiquitin-protein ligase complex SLX5-SLX8 subunit SLX5 (619 aa).

Residues 1–23 (MHSDTNGRTKSNNSPSDNNPNET) are disordered. Residues 11-21 (SNNSPSDNNPN) are compositionally biased toward low complexity. A phosphoserine mark is found at S14 and S29. The segment at 63–90 (VRSDSRSRNSQRTHITASSERPDFQANN) is disordered. A compositionally biased stretch (polar residues) spans 70 to 90 (RNSQRTHITASSERPDFQANN). The interval 201–335 (SRRQLLRRSA…ALFTEFRNQL (135 aa)) is EUC1 interaction domain.

Component of the heterodimeric SUMO-targeted ubiquitin ligase (STUbL) complex composed of SLX5 and SLX8. Interacts with sirtuin SIR2. Interacts with KAR9. Interacts with EUC1.

It is found in the nucleus. The protein localises to the chromosome. Its subcellular location is the centromere. It localises to the kinetochore. It carries out the reaction S-ubiquitinyl-[E2 ubiquitin-conjugating enzyme]-L-cysteine + [acceptor protein]-L-lysine = [E2 ubiquitin-conjugating enzyme]-L-cysteine + N(6)-ubiquitinyl-[acceptor protein]-L-lysine.. It functions in the pathway protein modification; protein ubiquitination. Its function is as follows. Component of the SUMO-targeted ubiquitin ligase (STUbL) complex SLX5/SLX8 that mediates ubiquitination and subsequent desumoylation of sumoylated proteins and proteins containing SUMO-like domains for their degradation. The STUbL complex SLX5/SLX8 stimulates ubiquitin conjugating enzymes, including UBC1, UBC4, UBC5 and UBC13-MMS2, and mediates the proteolytic down-regulation of sumoylated proteins. The STUbL complex SLX5/SLX8 is involved in ubiquitin-mediated degradation of histone variant CSE4, preventing mislocalization to euchromatin. The complex plays an essential role in maintenance of chromosome stability and links SUMO-dependent ubiquitination to a centromere-specific function during mitosis. The complex is involved in proteolysis of spindle positioning protein KAR9 and ensures correct spindle function by regulating levels of microtubule-associated proteins. During replication, the complex helps prevent DNA lesions via recombination and has a role in localizing the DNA damage protein DCD2. The complex especially ubiquitinates the nuclease YEN1 and prevents persistent accumulation of a fraction of YEN1 associated with sites of activity in late G2/M and helps maintain the balance between pro- and anti-crossover pathways during homologous recombination. It is also involved in ubiquitin-mediated degradation of DNA repair proteins RAD52 and RAD57. Along with SIR2, promotes silencing of genes at telomeric or ribosomal DNA (rDNA) loci. Finally, the complex is recruited to distinct genomic hotspots of non-H2B protein ubiquitination (ub-hotspots) by the sumoylated transcription factor-like protein EUC1 where it ubiquitinates EUC1 and presumably other targets. The protein is E3 ubiquitin-protein ligase complex SLX5-SLX8 subunit SLX5 (SLX5) of Saccharomyces cerevisiae (strain ATCC 204508 / S288c) (Baker's yeast).